Reading from the N-terminus, the 365-residue chain is GTPase Obg (365 aa).

Positions 2 to 160 (ESFVDEVAIE…KFLRLSLKLL (159 aa)) constitute an Obg domain. The region spanning 161-329 (ADVGIVGLPN…LLEAMDEAFF (169 aa)) is the OBG-type G domain. GTP is bound by residues 167–174 (GLPNAGKS), 192–196 (FTTLS), 215–218 (DIPG), 282–285 (NKID), and 310–312 (SAD). Mg(2+) is bound by residues serine 174 and threonine 194.

The protein belongs to the TRAFAC class OBG-HflX-like GTPase superfamily. OBG GTPase family. As to quaternary structure, monomer. Mg(2+) serves as cofactor.

It localises to the cytoplasm. Functionally, an essential GTPase which binds GTP, GDP and possibly (p)ppGpp with moderate affinity, with high nucleotide exchange rates and a fairly low GTP hydrolysis rate. Plays a role in control of the cell cycle, stress response, ribosome biogenesis and in those bacteria that undergo differentiation, in morphogenesis control. The sequence is that of GTPase Obg from Leptospira borgpetersenii serovar Hardjo-bovis (strain JB197).